We begin with the raw amino-acid sequence, 195 residues long: Cytochrome c oxidase assembly protein CtaG (195 aa).

Residues 1–9 (MALNGPQKT) lie on the Cytoplasmic side of the membrane. Residues 10-30 (VVQLVGVVVLMGGLAWASVPF) traverse the membrane as a helical; Signal-anchor for type II membrane protein segment. At 31–195 (YDWFCRVTGF…DTSGAETELN (165 aa)) the chain is on the periplasmic side.

Belongs to the COX11/CtaG family.

Its subcellular location is the cell inner membrane. Functionally, exerts its effect at some terminal stage of cytochrome c oxidase synthesis, probably by being involved in the insertion of the copper B into subunit I. This is Cytochrome c oxidase assembly protein CtaG from Ruegeria sp. (strain TM1040) (Silicibacter sp.).